The primary structure comprises 389 residues: 23S rRNA (uracil(747)-C(5))-methyltransferase RlmC (389 aa).

The [4Fe-4S] cluster site is built by Cys12, Cys20, Cys23, and Cys99. Gln224, Phe253, Glu274, and Asn321 together coordinate S-adenosyl-L-methionine. Cys348 functions as the Nucleophile in the catalytic mechanism.

It belongs to the class I-like SAM-binding methyltransferase superfamily. RNA M5U methyltransferase family. RlmC subfamily.

It catalyses the reaction uridine(747) in 23S rRNA + S-adenosyl-L-methionine = 5-methyluridine(747) in 23S rRNA + S-adenosyl-L-homocysteine + H(+). Catalyzes the formation of 5-methyl-uridine at position 747 (m5U747) in 23S rRNA. This is 23S rRNA (uracil(747)-C(5))-methyltransferase RlmC from Shewanella putrefaciens (strain CN-32 / ATCC BAA-453).